Consider the following 493-residue polypeptide: High affinity nitrate transporter 2.7 (493 aa).

Residues 1–19 are compositionally biased toward polar residues; it reads MEPSQRNTKPPSFSDSTIP. Positions 1–20 are disordered; it reads MEPSQRNTKPPSFSDSTIPV. 12 helical membrane-spanning segments follow: residues 46 to 66, 70 to 90, 113 to 133, 136 to 156, 174 to 194, 202 to 222, 257 to 277, 299 to 319, 341 to 361, 368 to 388, 400 to 420, and 431 to 451; these read WLSLFSCFFSTFSIPPLVPVI, LNLSASTVSAAGIASFAGSIF, FLTAPVILSASLVSSPTSFIL, FFVGFSLANFVANQYWMSSMF, VGAGISQLLMPLIYSTIAEFL, VSFVFPAIFQVTTAVLVLLYG, FVEILIGGLGNYRAWILALLY, FGVNLEAAGTIAASFGISNIA, LWGLWIVQSVAGLLCVLLGRV, ILVMWVFSVFVQAASGLVFGV, VAGITGSGGTVGAVVTQFLLF, and ISLMGLMTFVFALSVTSIYFP.

This sequence belongs to the major facilitator superfamily. Nitrate/nitrite porter (TC 2.A.1.8) family. As to expression, expressed in seeds, leaves and shoots. Lower expression in roots.

It localises to the vacuole membrane. Involved in high-affinity nitrate transport. Controls nitrate content in seeds. The chain is High affinity nitrate transporter 2.7 (NRT2.7) from Arabidopsis thaliana (Mouse-ear cress).